We begin with the raw amino-acid sequence, 494 residues long: Metal cation symporter ZIP14 (494 aa).

Positions 1–34 (MTLRRASGCRQLTLTIGLALTLGLLQWPIGDVRG) are cleaved as a signal peptide. The Extracellular segment spans residues 35-152 (QDGASPAQVL…PTEAEVWGYG (118 aa)). The helical transmembrane segment at 153-173 (LLCVTVISLCSLVGASVVPFM) threads the bilayer. The Cytoplasmic portion of the chain corresponds to 174 to 181 (RKTFYKRL). The helical transmembrane segment at 182 to 202 (LLYFIALAIGTLYSNALFQLI) threads the bilayer. Residues 203-219 (PEAFGFDPMEDYYVPKS) are Extracellular-facing. Residues 220–240 (AVVFGGFYLFFFTEKILKMIL) traverse the membrane as a helical segment. Topologically, residues 241–397 (KPKDTGGHGH…LLNAGMSIQQ (157 aa)) are cytoplasmic. Positions 248–255 (HGHGHSHF) match the HHHGHXHX-motif motif. The XEXPHE-motif motif lies at 376 to 381 (EEFPHE). The chain crosses the membrane as a helical span at residues 398 to 418 (ALFFNFLSACCCYLGMGFGIL). Residues 419-426 (AGNNFSPN) are Extracellular-facing. A helical membrane pass occupies residues 427 to 447 (WIFALAGGMFLYIALADMFPE). Over 448–462 (MNEVSREEEEAGGSG) the chain is Cytoplasmic. The chain crosses the membrane as a helical span at residues 463 to 483 (FLLTFALQNAGLLTGFAIMLV). Over 484–494 (LTIYSGQIQLG) the chain is Extracellular.

This sequence belongs to the ZIP transporter (TC 2.A.5) family. Homotrimer.

The protein localises to the cell membrane. It localises to the apical cell membrane. The protein resides in the basolateral cell membrane. It is found in the early endosome membrane. Its subcellular location is the late endosome membrane. The protein localises to the lysosome membrane. It catalyses the reaction Zn(2+)(out) + 2 hydrogencarbonate(out) = Zn(2+)(in) + 2 hydrogencarbonate(in). It carries out the reaction Mn(2+)(out) + 2 hydrogencarbonate(out) = Mn(2+)(in) + 2 hydrogencarbonate(in). The enzyme catalyses Fe(2+)(out) + 2 hydrogencarbonate(out) = Fe(2+)(in) + 2 hydrogencarbonate(in). The catalysed reaction is Cd(2+)(out) + 2 hydrogencarbonate(out) = Cd(2+)(in) + 2 hydrogencarbonate(in). Its function is as follows. Broad-scope metal ion transporter with a preference for zinc uptake. Also mediates cellular uptake of nontransferrin-bound iron. In terms of biological role, electroneutral transporter of the plasma membrane mediating the cellular uptake of the divalent metal cations zinc, manganese and iron that are important for tissue homeostasis, metabolism, development and immunity. Functions as an energy-dependent symporter, transporting through the membranes an electroneutral complex composed of a divalent metal cation and two bicarbonate anions. Beside these endogenous cellular substrates, can also import cadmium a non-essential metal which is cytotoxic and carcinogenic. In Danio rerio (Zebrafish), this protein is Metal cation symporter ZIP14.